A 56-amino-acid chain; its full sequence is Small ribosomal subunit protein uS14 (56 aa).

The Zn(2+) site is built by Cys21, Cys24, Cys39, and Cys42.

The protein belongs to the universal ribosomal protein uS14 family. Zinc-binding uS14 subfamily. Part of the 30S ribosomal subunit. Zn(2+) serves as cofactor.

Its function is as follows. Binds 16S rRNA, required for the assembly of 30S particles. This is Small ribosomal subunit protein uS14 from Pyrococcus abyssi (strain GE5 / Orsay).